Reading from the N-terminus, the 419-residue chain is Synaptotagmin-2 (419 aa).

At 1–62 the chain is on the vesicular side; sequence MRNIFKRNQE…NEINKIPLPP (62 aa). Residues 16–39 form a disordered region; the sequence is ATTTATMPIGPVDNSTESGGAGES. A glycan (N-linked (GlcNAc...) asparagine) is linked at asparagine 29. A helical transmembrane segment spans residues 63 to 83; it reads WALIAIAVVAGLLLLTCCFCI. Topologically, residues 84 to 419 are cytoplasmic; sequence CKKCCCKKKK…EVDALLGKNK (336 aa). A disordered region spans residues 99 to 138; it reads GKGMKNAMNMKDMKGGQDDDDAETGLTEGEGEGEEEKEPE. The span at 116–136 shows a compositional bias: acidic residues; the sequence is DDDDAETGLTEGEGEGEEEKE. Residues threonine 122 and threonine 125 each carry the phosphothreonine modification. Positions 133-379 are phospholipid binding; the sequence is EEKEPENLGK…AIGKIFVGSN (247 aa). 2 consecutive C2 domains span residues 139 to 258 and 270 to 403; these read NLGK…EEWR and KLGD…AQWH. Positions 169, 170, and 176 each coordinate Ca(2+). Phosphothreonine is present on threonine 199. A Phosphotyrosine modification is found at tyrosine 227. Ca(2+) is bound by residues aspartate 228, phenylalanine 229, aspartate 230, serine 233, lysine 234, aspartate 236, aspartate 301, aspartate 307, aspartate 361, and aspartate 363. Threonine 383 is subject to Phosphothreonine.

Belongs to the synaptotagmin family. As to quaternary structure, homotetramer. Heterodimer; heterodimerizes with SYT1 in presence of calcium. Interacts with STON2. Interacts with SCAMP5. Interacts with PRRT2. Requires Ca(2+) as cofactor. Post-translationally, phosphorylation at Thr-199 by WNK1, changes the calcium requirement for SYT2-binding to phospholipid membranes. In terms of tissue distribution, expressed at the neuromuscular junction. Expressed in melanocytes.

The protein localises to the cytoplasmic vesicle. It localises to the secretory vesicle. Its subcellular location is the synaptic vesicle membrane. The protein resides in the chromaffin granule membrane. It is found in the cytoplasm. In terms of biological role, exhibits calcium-dependent phospholipid and inositol polyphosphate binding properties. May have a regulatory role in the membrane interactions during trafficking of synaptic vesicles at the active zone of the synapse. Plays a role in dendrite formation by melanocytes. In Homo sapiens (Human), this protein is Synaptotagmin-2.